The sequence spans 224 residues: Cytidylate kinase (224 aa).

Residue 10–18 (GPASAGKST) participates in ATP binding.

Belongs to the cytidylate kinase family. Type 1 subfamily.

It localises to the cytoplasm. It catalyses the reaction CMP + ATP = CDP + ADP. The enzyme catalyses dCMP + ATP = dCDP + ADP. This is Cytidylate kinase from Leuconostoc mesenteroides subsp. mesenteroides (strain ATCC 8293 / DSM 20343 / BCRC 11652 / CCM 1803 / JCM 6124 / NCDO 523 / NBRC 100496 / NCIMB 8023 / NCTC 12954 / NRRL B-1118 / 37Y).